A 39-amino-acid polypeptide reads, in one-letter code: U2-ctenitoxin-Co1a (39 aa).

Disulfide bonds are present. As to expression, expressed by the venom gland.

The protein resides in the secreted. In terms of biological role, omega-agatoxins are antagonists of voltage-gated calcium channels (Cav). In Ctenus ornatus (Brazilian spider), this protein is U2-ctenitoxin-Co1a.